A 332-amino-acid polypeptide reads, in one-letter code: DNA-directed RNA polymerase subunit alpha (332 aa).

The alpha N-terminal domain (alpha-NTD) stretch occupies residues 1-231 (MVREKVTVST…DLFIPFLHME (231 aa)). The alpha C-terminal domain (alpha-CTD) stretch occupies residues 262–332 (LSLESLFIDQ…FALDLPKNLN (71 aa)).

It belongs to the RNA polymerase alpha chain family. In plastids the minimal PEP RNA polymerase catalytic core is composed of four subunits: alpha, beta, beta', and beta''. When a (nuclear-encoded) sigma factor is associated with the core the holoenzyme is formed, which can initiate transcription.

It is found in the plastid. It catalyses the reaction RNA(n) + a ribonucleoside 5'-triphosphate = RNA(n+1) + diphosphate. DNA-dependent RNA polymerase catalyzes the transcription of DNA into RNA using the four ribonucleoside triphosphates as substrates. The protein is DNA-directed RNA polymerase subunit alpha of Cuscuta japonica (Japanese dodder).